Reading from the N-terminus, the 255-residue chain is Ciliogenesis and planar polarity effector 2 (255 aa).

A small GTPase-like region spans residues 52–255; the sequence is PADIASYKLF…VIAGLVGGAD (204 aa). GTP-binding positions include 64–71 and 177–180; these read GRSGAGKT and TKLD.

This sequence belongs to the small GTPase superfamily. Rab family.

The protein resides in the cytoplasm. Its subcellular location is the cytoskeleton. It is found in the cilium basal body. Potential effector of the planar cell polarity signaling pathway. Plays a role in targeted membrane trafficking most probably at the level of vesicle fusion with membranes. Involved in cilium biogenesis by regulating the transport of cargo proteins to the basal body and to the apical tips of cilia. More generally involved in exocytosis in secretory cells. The protein is Ciliogenesis and planar polarity effector 2 (cplane2) of Xenopus tropicalis (Western clawed frog).